A 563-amino-acid polypeptide reads, in one-letter code: GTPase Obg (563 aa).

In terms of domain architecture, Obg spans 2–168 (SDFVDRVTVH…RDVILELKSI (167 aa)). Residues 169–349 (ADVALVGFPS…LNWALADLVT (181 aa)) form the OBG-type G domain. Residues 175-182 (GFPSAGKS), 200-204 (FTTLV), 221-224 (DVPG), 301-304 (NKVD), and 330-332 (STA) contribute to the GTP site. Positions 182 and 202 each coordinate Mg(2+). The 87-residue stretch at 383–469 (DEGGNALDFT…DRAVEFDWDP (87 aa)) folds into the OCT domain. The interval 525-563 (MMAERKAGHWADPSVDDDRHDETSLFGRGETADDEDVEQ) is disordered.

It belongs to the TRAFAC class OBG-HflX-like GTPase superfamily. OBG GTPase family. As to quaternary structure, monomer. It depends on Mg(2+) as a cofactor.

It is found in the cytoplasm. In terms of biological role, an essential GTPase which binds GTP, GDP and possibly (p)ppGpp with moderate affinity, with high nucleotide exchange rates and a fairly low GTP hydrolysis rate. Plays a role in control of the cell cycle, stress response, ribosome biogenesis and in those bacteria that undergo differentiation, in morphogenesis control. This Bifidobacterium adolescentis (strain ATCC 15703 / DSM 20083 / NCTC 11814 / E194a) protein is GTPase Obg.